We begin with the raw amino-acid sequence, 90 residues long: Probable Fe(2+)-trafficking protein (90 aa).

Belongs to the Fe(2+)-trafficking protein family.

Functionally, could be a mediator in iron transactions between iron acquisition and iron-requiring processes, such as synthesis and/or repair of Fe-S clusters in biosynthetic enzymes. In Haemophilus influenzae (strain PittEE), this protein is Probable Fe(2+)-trafficking protein.